The following is a 138-amino-acid chain: Nucleoside diphosphate kinase (138 aa).

ATP contacts are provided by Lys9, Phe57, Arg85, Thr91, Arg102, and Asn112. The active-site Pros-phosphohistidine intermediate is the His115.

The protein belongs to the NDK family. Mg(2+) is required as a cofactor.

Its subcellular location is the cytoplasm. The enzyme catalyses a 2'-deoxyribonucleoside 5'-diphosphate + ATP = a 2'-deoxyribonucleoside 5'-triphosphate + ADP. It catalyses the reaction a ribonucleoside 5'-diphosphate + ATP = a ribonucleoside 5'-triphosphate + ADP. In terms of biological role, major role in the synthesis of nucleoside triphosphates other than ATP. The ATP gamma phosphate is transferred to the NDP beta phosphate via a ping-pong mechanism, using a phosphorylated active-site intermediate. This Picrophilus torridus (strain ATCC 700027 / DSM 9790 / JCM 10055 / NBRC 100828 / KAW 2/3) protein is Nucleoside diphosphate kinase.